The primary structure comprises 144 residues: Large ribosomal subunit protein uL13 (144 aa).

Belongs to the universal ribosomal protein uL13 family. Part of the 50S ribosomal subunit.

In terms of biological role, this protein is one of the early assembly proteins of the 50S ribosomal subunit, although it is not seen to bind rRNA by itself. It is important during the early stages of 50S assembly. This Clostridium kluyveri (strain NBRC 12016) protein is Large ribosomal subunit protein uL13.